A 382-amino-acid polypeptide reads, in one-letter code: Mannitol-1-phosphate 5-dehydrogenase (382 aa).

Residue 4-15 (AVHFGAGNIGRG) coordinates NAD(+).

It belongs to the mannitol dehydrogenase family. As to quaternary structure, monomer.

The catalysed reaction is D-mannitol 1-phosphate + NAD(+) = beta-D-fructose 6-phosphate + NADH + H(+). In Streptococcus mutans serotype c (strain ATCC 700610 / UA159), this protein is Mannitol-1-phosphate 5-dehydrogenase (mtlD).